The sequence spans 690 residues: Beta-galactosidase (690 aa).

Asparagine 173 provides a ligand contact to substrate. The active-site Proton donor is the glutamate 174. Tryptophan 345 lines the substrate pocket.

The protein belongs to the glycosyl hydrolase 42 family.

It carries out the reaction Hydrolysis of terminal non-reducing beta-D-galactose residues in beta-D-galactosides.. Activity stimulated by beta-mercaptoethanol. In terms of biological role, highly specific towards beta-D-galactoside substrates. Hydrolyzes 5-bromo-4-chloro-3-indolyl-beta-D-galactopyranoside (X-Gal) and o-nitrophenyl-beta-D-galactopyranoside (ONPG). Has activity against p-nitrophenyl(pNP)-beta-D-galactoside, but not significantly at all towards pNP-alpha-D-galactoside, pNP-beta-D-glucoside, pNP-beta-D-mannoside, pNP-beta-L-fucoside, pNP-beta-D-xyloside, pNP-beta-L-arabinoside, pNP-beta-D-galuronide, pNP-beta-D-glucuronide, pNP-beta-D-lactoside or pNP-beta-D-cellobioside. The protein is Beta-galactosidase of Arthrobacter sp.